Consider the following 137-residue polypeptide: Small ribosomal subunit protein eS19 (137 aa).

The protein belongs to the eukaryotic ribosomal protein eS19 family. Component of the small ribosomal subunit.

Its subcellular location is the cytoplasm. The polypeptide is Small ribosomal subunit protein eS19 (RPS19) (Encephalitozoon cuniculi (strain GB-M1) (Microsporidian parasite)).